Here is a 361-residue protein sequence, read N- to C-terminus: S-adenosylmethionine:tRNA ribosyltransferase-isomerase (361 aa).

This sequence belongs to the QueA family. In terms of assembly, monomer.

The protein resides in the cytoplasm. It carries out the reaction 7-aminomethyl-7-carbaguanosine(34) in tRNA + S-adenosyl-L-methionine = epoxyqueuosine(34) in tRNA + adenine + L-methionine + 2 H(+). The protein operates within tRNA modification; tRNA-queuosine biosynthesis. Transfers and isomerizes the ribose moiety from AdoMet to the 7-aminomethyl group of 7-deazaguanine (preQ1-tRNA) to give epoxyqueuosine (oQ-tRNA). In Actinobacillus pleuropneumoniae serotype 5b (strain L20), this protein is S-adenosylmethionine:tRNA ribosyltransferase-isomerase.